We begin with the raw amino-acid sequence, 1286 residues long: Lysine-specific demethylase JMJ705 (1286 aa).

A JmjN domain is found at 25–66 (APEFRPTAAEFADPVSYILKIEPAAAPYGICKVVPPLPPPPK). The disordered stretch occupies residues 82 to 105 (PDDRSPSFPTRHQQVGLCPRRTRP). Residues 201-367 (ETAWNMRGVA…IAKEAAIRRA (167 aa)) form the JmjC domain. Residues His244, Glu246, and His335 each coordinate Fe cation. A compositionally biased stretch (polar residues) spans 641-679 (PNSSNNVGCVGTKLSSSSTERQERPSSQNAHCNGSSVIS). Disordered regions lie at residues 641–686 (PNSS…KGVR), 1013–1060 (AEPV…HSQE), and 1077–1164 (PAGT…PKQA). Residues 1119–1136 (HASGQKSNVQEANANSAS) show a composition bias toward polar residues. The C2H2-type 1; degenerate zinc-finger motif lies at 1167 to 1189 (YSCDIEGCSMSFRTKRDLSLHKS). C2H2-type zinc fingers lie at residues 1190 to 1214 (DICP…RKVH), 1220 to 1244 (LTCP…LRVH), and 1250 to 1276 (YVCH…KTGH).

The cofactor is Fe(2+). In terms of tissue distribution, expressed in leaves and flag leaves. Expressed at low levels in roots, shoots, stems and panicles.

The protein resides in the nucleus. It catalyses the reaction N(6),N(6),N(6)-trimethyl-L-lysyl(27)-[histone H3] + 2 2-oxoglutarate + 2 O2 = N(6)-methyl-L-lysyl(27)-[histone H3] + 2 formaldehyde + 2 succinate + 2 CO2. In terms of biological role, histone demethylase that demethylates 'Lys-27' (H3K27me) of histone H3 with a specific activity for H3K27me3 and H3K27me2. No activity on H3K4me3, H3K9me3, H3K27me1 and H3K36me3. Involved in biotic stress response. May demethylate H3K27me3-marked defense-related genes and increase their basal and induced expression levels during pathogen infection. The chain is Lysine-specific demethylase JMJ705 (JMJ705) from Oryza sativa subsp. japonica (Rice).